The chain runs to 166 residues: Packaging efficiency factor P6 (166 aa).

Residues 134–166 (ILPESAGDQQEAEPVPSVGDQQETAPRKRFRAI) form a disordered region.

As to quaternary structure, heterodimer of P6 and P9; further multimerizes as hexamers of heterodimers. Part of the dodecameric portal complex that is composed of the packaging efficiency factor P6, the DNA packaging ATPase P9, and the internal heterododecamer P20/P22 which spans the virion inner membrane.

The protein localises to the virion. Its function is as follows. Together with the packaging ATPase P9, forms the external part of the portal vertex that is embeded in the capsid and which plays critical roles in genome packaging and genome ejection. Both proteins multimerize as a single ring-shaped heterdodecamer arranged around a central channel. In Acinetobacter calcoaceticus (Arthrobacter siderocapsulatus), this protein is Packaging efficiency factor P6 (VI).